Consider the following 536-residue polypeptide: MKVAVAGCCHGALDKMYETLELLQRRHNVRPDLLLCCGDFQAVRNEADLRCMAVPAKYRHMQTFYRYYSGEKKAPVLTVFIGGNHEASNHLQELPYGGWVAPNIYYLGYAGVVRFRGVRIGGISGIFKSHDYRKGHFECPPYNQQTIRSAYHVRNIEVFKLKQLKHPMDIFMSHDWPQSIYHYGNKKQLLKMKSFFRQEVESNTLGSPAASELLQHLKPNYWFSAHLHVKFAAFMQHETKSKEELPKATKFLALDKCLPHRDFLQIIDIEHDPTAGDSLEYDAEWIAVLKATNSLINVTQSSWSVPENNGLHAKWDYSATEEAIKEVLEELNHNLKIPCNFTLTTTCYDPSKPQKNMEPVHTINPQTTEFCAQFGLTDINDRIQQVKEEGSVRGEYEEEEEEMDSSGSAEEPSEYNTDNSGLSSINPDEIMLDDEGGDEDLSTCSVDPSPDHPPEFSASFSDIRIMPDSMAVSSDDAMDSTNEELEKSGVNKQVEEKSLNERPLKRVGGSENGNSGIKIKRRNQAIYAAEDEDEAK.

The a divalent metal cation site is built by cysteine 8, histidine 10, aspartate 39, and asparagine 84. Residues 124–154 (SGIFKSHDYRKGHFECPPYNQQTIRSAYHVR) form a lariat recognition loop region. A divalent metal cation-binding residues include histidine 174, histidine 226, and histidine 228. Residues 388 to 536 (EEGSVRGEYE…YAAEDEDEAK (149 aa)) are disordered. Residues 414–426 (EYNTDNSGLSSIN) show a composition bias toward polar residues. Residues 430 to 441 (IMLDDEGGDEDL) are compositionally biased toward acidic residues. A compositionally biased stretch (basic and acidic residues) spans 484 to 504 (ELEKSGVNKQVEEKSLNERPL).

Belongs to the lariat debranching enzyme family. The cofactor is Fe(2+). It depends on Zn(2+) as a cofactor. Requires Mn(2+) as cofactor.

It is found in the nucleus. With respect to regulation, active in presence of diverse metals including Fe(2+), Zn(2+), Mn(2+). Also activated by Ca(2+). Binds two metal cations in two adjacent alpha and beta metal-binding pockets. Its function is as follows. Cleaves the 2'-5' phosphodiester linkage at the branch point of excised lariat intron RNA and converts them into linear molecules that can be subsequently degraded, thereby facilitating ribonucleotide turnover. Linked to its role in pre-mRNA processing mechanism, may also participate in retrovirus replication and have an antiviral cell-intrinsic defense function. This is Lariat debranching enzyme (DBR1) from Gallus gallus (Chicken).